The sequence spans 210 residues: Regulator of G-protein signaling 17 (210 aa).

Positions 1–21 (MRKRQQSQNEGTPAVSQAPGN) are disordered. Residues 84–200 (NFDKMMKAPA…LNSQIYKSFV (117 aa)) enclose the RGS domain. Residue tyrosine 137 is modified to Phosphotyrosine.

Interacts with GNAI1 and GNAQ. Interacts with GNAZ and GNAI2. Interacts with OPRM1. Forms a complex with mu-opioid receptors and G(alpha)z/i2 subunits, including GNAZ and GNAI2; the formation of this complex results in mu-opioid receptor desensitization. Interacts with HINT1. In terms of processing, N- and O-glycosylated in synapsomal membranes. Serine phosphorylated in synapsomal membranes. Post-translationally, sumoylated with SUMO1 and SUM02 in synaptosomes. The sumoylated forms act as a scaffold for sequestering mu-opioid receptor-activated G(alpha) subunits. Desumoylated by HINT1. Predominantly expressed in the cerebellum. Also expressed in the cortex and medulla. Weakly expressed in a number of peripheral tissues notably spleen, lung and leukocytes.

It localises to the membrane. Its subcellular location is the synapse. It is found in the synaptosome. The protein resides in the nucleus. The protein localises to the cytoplasm. Regulates G protein-coupled receptor signaling cascades, including signaling via muscarinic acetylcholine receptor CHRM2 and dopamine receptor DRD2. Inhibits signal transduction by increasing the GTPase activity of G protein alpha subunits, thereby driving them into their inactive GDP-bound form. Binds selectively to GNAZ and GNAI2 subunits, accelerates their GTPase activity and regulates their signaling activities. Negatively regulates mu-opioid receptor-mediated activation of the G-proteins. The protein is Regulator of G-protein signaling 17 (RGS17) of Homo sapiens (Human).